We begin with the raw amino-acid sequence, 268 residues long: ELL-associated factor 1 (268 aa).

The interval 106–268 is disordered; that stretch reads IQVKKTRAEG…LSESGSDSDD (163 aa). Residues 128 to 154 show a composition bias toward pro residues; that stretch reads ARPPQPSQPPPPPPPMPFRAPTKPPAG. Ser165 carries the post-translational modification Phosphoserine. The span at 171-181 shows a compositional bias: basic and acidic residues; that stretch reads DDIKRELRAEV. The interval 182-262 is necessary for transactivation activity; sequence DIIEQMSSSS…LRNDLQLSES (81 aa). Low complexity predominate over residues 188–203; the sequence is SSSSGSSSSDSESSSG. Residues 238-268 are compositionally biased toward polar residues; it reads NGTSRPQGSSQLMNTLRNDLQLSESGSDSDD.

This sequence belongs to the EAF family. Component of the super elongation complex (SEC), at least composed of EAF1, EAF2, CDK9, MLLT3/AF9, AFF (AFF1 or AFF4), the P-TEFb complex and ELL (ELL, ELL2 or ELL3). Interacts with ELL and ELL2.

The protein localises to the nucleus speckle. Its subcellular location is the nucleus. It is found in the cajal body. Functionally, acts as a transcriptional transactivator of ELL and ELL2 elongation activities. This chain is ELL-associated factor 1 (Eaf1), found in Mus musculus (Mouse).